The sequence spans 308 residues: uncharacterized protein (308 aa).

This is an uncharacterized protein from Escherichia coli (strain K12).